Here is a 305-residue protein sequence, read N- to C-terminus: Oxygen-dependent coproporphyrinogen-III oxidase (305 aa).

Substrate is bound at residue S92. Positions 96 and 106 each coordinate a divalent metal cation. H106 serves as the catalytic Proton donor. 108–110 (NVR) lines the substrate pocket. A divalent metal cation contacts are provided by H145 and H175. Positions 239 to 274 (YVEFNLLFDRGTLFGLQSGGRAESILISLPPLVRWE) are important for dimerization. 257–259 (GGR) contacts substrate.

Belongs to the aerobic coproporphyrinogen-III oxidase family. Homodimer. Requires a divalent metal cation as cofactor.

Its subcellular location is the cytoplasm. It catalyses the reaction coproporphyrinogen III + O2 + 2 H(+) = protoporphyrinogen IX + 2 CO2 + 2 H2O. It participates in porphyrin-containing compound metabolism; protoporphyrin-IX biosynthesis; protoporphyrinogen-IX from coproporphyrinogen-III (O2 route): step 1/1. Functionally, involved in the heme biosynthesis. Catalyzes the aerobic oxidative decarboxylation of propionate groups of rings A and B of coproporphyrinogen-III to yield the vinyl groups in protoporphyrinogen-IX. This chain is Oxygen-dependent coproporphyrinogen-III oxidase, found in Xylella fastidiosa (strain 9a5c).